The primary structure comprises 241 residues: Uridylate kinase (241 aa).

14-17 (KLSG) provides a ligand contact to ATP. The involved in allosteric activation by GTP stretch occupies residues 22–27 (GNQGFG). A UMP-binding site is contributed by Gly-56. Gly-57 and Arg-61 together coordinate ATP. UMP-binding positions include Asp-76 and 137–144 (TGNPYFTT). ATP is bound by residues Thr-164, Tyr-170, and Asp-173.

Belongs to the UMP kinase family. As to quaternary structure, homohexamer.

It is found in the cytoplasm. It catalyses the reaction UMP + ATP = UDP + ADP. It functions in the pathway pyrimidine metabolism; CTP biosynthesis via de novo pathway; UDP from UMP (UMPK route): step 1/1. Its activity is regulated as follows. Allosterically activated by GTP. Inhibited by UTP. Its function is as follows. Catalyzes the reversible phosphorylation of UMP to UDP. This Syntrophotalea carbinolica (strain DSM 2380 / NBRC 103641 / GraBd1) (Pelobacter carbinolicus) protein is Uridylate kinase.